Reading from the N-terminus, the 170-residue chain is Adenine phosphoribosyltransferase (170 aa).

Belongs to the purine/pyrimidine phosphoribosyltransferase family. Homodimer.

The protein localises to the cytoplasm. It catalyses the reaction AMP + diphosphate = 5-phospho-alpha-D-ribose 1-diphosphate + adenine. Its pathway is purine metabolism; AMP biosynthesis via salvage pathway; AMP from adenine: step 1/1. Its function is as follows. Catalyzes a salvage reaction resulting in the formation of AMP, that is energically less costly than de novo synthesis. This chain is Adenine phosphoribosyltransferase, found in Geobacillus thermodenitrificans (strain NG80-2).